The following is a 107-amino-acid chain: UPF0060 membrane protein RPB_2370 (107 aa).

A run of 4 helical transmembrane segments spans residues 5–25 (IIYVGAAIAEIAGCFAFWGWL), 31–51 (VWWLAPGLLSLALFAYLLTLV), 61–81 (AAYGGIYIVASLAWLWSVEGV), and 85–105 (RWDVSGACVCLAGAAIILWGP).

The protein belongs to the UPF0060 family.

The protein localises to the cell inner membrane. This Rhodopseudomonas palustris (strain HaA2) protein is UPF0060 membrane protein RPB_2370.